Here is a 79-residue protein sequence, read N- to C-terminus: uncharacterized protein (79 aa).

The signal sequence occupies residues 1–20 (MSQLMGIITRLQSLQETAEA).

This is an uncharacterized protein from Bacillus subtilis (strain 168).